Here is a 133-residue protein sequence, read N- to C-terminus: Cytochrome c-type biogenesis protein CcmE (133 aa).

The Cytoplasmic portion of the chain corresponds to 1–7 (MKKKHKR). The chain crosses the membrane as a helical; Signal-anchor for type II membrane protein span at residues 8 to 28 (LLITSGIFCFLSCIVFFILTT). The Periplasmic segment spans residues 29–133 (LKENISFFYT…YMPKVLKQIP (105 aa)). His120 and Tyr124 together coordinate heme.

Belongs to the CcmE/CycJ family.

The protein resides in the cell inner membrane. Functionally, heme chaperone required for the biogenesis of c-type cytochromes. Transiently binds heme delivered by CcmC and transfers the heme to apo-cytochromes in a process facilitated by CcmF and CcmH. The protein is Cytochrome c-type biogenesis protein CcmE of Wolbachia sp. subsp. Drosophila simulans (strain wRi).